The sequence spans 225 residues: MKITFYGHASLAIEVGGKHIIVDPFITGNPQAAAIDINTLKADYILLTHAHGDHVLDVETIAKNTNAVIVSNAEITSYYAKKGFNSHPMNHGGSWKFDFGKVKYVNAIHSSSFPDGTYGGNPGGFVIEGEHKNIYIAGDTALTYDMKLIPLRTKLDLAILPIGNNFTMDVEDAIIASDFIECDKILGYHFDTFGYIEINHEESIKKFFDKGKDLMLLAIGESIEL.

The protein belongs to the UPF0173 family.

This chain is UPF0173 metal-dependent hydrolase Fjoh_2786, found in Flavobacterium johnsoniae (strain ATCC 17061 / DSM 2064 / JCM 8514 / BCRC 14874 / CCUG 350202 / NBRC 14942 / NCIMB 11054 / UW101) (Cytophaga johnsonae).